Here is a 428-residue protein sequence, read N- to C-terminus: RUN domain-containing protein 3A (428 aa).

Residues 52 to 182 (DDSSEEFINF…IDFSFCLKGE (131 aa)) enclose the RUN domain. Residues 237-314 (ESWRNKCRKM…ELQEQLTSLI (78 aa)) are a coiled coil. Residues 349 to 375 (HRGSFPSPEPHISLTTGSQRTERKQNG) form a disordered region.

It belongs to the RUNDC3 family.

The polypeptide is RUN domain-containing protein 3A (rundc3a) (Danio rerio (Zebrafish)).